A 126-amino-acid chain; its full sequence is Histone H2B type 1-K (126 aa).

Low complexity predominate over residues 1–12 (MPEPAKSAPAPK). Positions 1 to 36 (MPEPAKSAPAPKKGSKKAVTKAQKKDGKKRKRSRKE) are disordered. N-acetylproline is present on P2. Position 3 is an ADP-ribosyl glutamic acid (E3). At K6 the chain carries N6-(2-hydroxyisobutyryl)lysine; alternate. Residue K6 is modified to N6-(beta-hydroxybutyryl)lysine; alternate. Position 6 is an N6-acetyllysine; alternate (K6). Residue K6 is modified to N6-butyryllysine; alternate. K6 is modified (N6-crotonyllysine; alternate). K6 carries the post-translational modification N6-lactoyllysine; alternate. A Glycyl lysine isopeptide (Lys-Gly) (interchain with G-Cter in SUMO2); alternate cross-link involves residue K6. S7 bears the ADP-ribosylserine mark. K12 carries the N6-(beta-hydroxybutyryl)lysine; alternate modification. N6-acetyllysine; alternate is present on residues K12 and K13. Residues K12 and K13 each carry the N6-crotonyllysine; alternate modification. K12 is subject to N6-lactoyllysine; alternate. The residue at position 13 (K13) is an N6-(2-hydroxyisobutyryl)lysine; alternate. S15 carries the post-translational modification Phosphoserine; by STK4/MST1. K16, K17, K21, and K24 each carry N6-acetyllysine; alternate. Residues K16, K17, K21, and K24 each carry the N6-crotonyllysine; alternate modification. N6-lactoyllysine; alternate occurs at positions 16, 17, 21, and 24. K17 bears the N6-glutaryllysine; alternate mark. N6-(2-hydroxyisobutyryl)lysine; alternate occurs at positions 21 and 24. The residue at position 21 (K21) is an N6-(beta-hydroxybutyryl)lysine; alternate. K21 is modified (N6-butyryllysine; alternate). A Glycyl lysine isopeptide (Lys-Gly) (interchain with G-Cter in SUMO2); alternate cross-link involves residue K21. K25 carries the N6-(2-hydroxyisobutyryl)lysine modification. An N6-(2-hydroxyisobutyryl)lysine; alternate modification is found at K35. N6-(beta-hydroxybutyryl)lysine; alternate is present on K35. N6-crotonyllysine; alternate is present on K35. Position 35 is an N6-glutaryllysine; alternate (K35). The residue at position 35 (K35) is an N6-succinyllysine; alternate. A Glycyl lysine isopeptide (Lys-Gly) (interchain with G-Cter in ubiquitin); alternate cross-link involves residue K35. PolyADP-ribosyl glutamic acid is present on E36. A Phosphoserine; by AMPK modification is found at S37. N6-(2-hydroxyisobutyryl)lysine; alternate is present on residues K44, K47, and K58. K44 carries the N6-lactoyllysine; alternate modification. 2 positions are modified to N6-glutaryllysine; alternate: K44 and K47. K47 carries the N6-methyllysine; alternate modification. K58 is modified (N6,N6-dimethyllysine; alternate). Dimethylated arginine is present on R80. K86 is modified (N6-(2-hydroxyisobutyryl)lysine; alternate). K86 is subject to N6-acetyllysine; alternate. K86 carries the N6-lactoyllysine; alternate modification. K86 carries the post-translational modification N6,N6,N6-trimethyllysine; alternate. R87 and R93 each carry omega-N-methylarginine. K109 is subject to N6-(2-hydroxyisobutyryl)lysine; alternate. Position 109 is an N6-lactoyllysine; alternate (K109). Residue K109 is modified to N6-glutaryllysine; alternate. Residue K109 is modified to N6-methyllysine; alternate. S113 is a glycosylation site (O-linked (GlcNAc) serine). T116 carries the post-translational modification Phosphothreonine. K117 and K121 each carry N6-(2-hydroxyisobutyryl)lysine; alternate. K117 is modified (N6-(beta-hydroxybutyryl)lysine; alternate). N6-lactoyllysine; alternate is present on residues K117 and K121. K117 and K121 each carry N6-glutaryllysine; alternate. Residues K117 and K121 each carry the N6-succinyllysine; alternate modification. K117 carries the post-translational modification N6-methylated lysine; alternate. K121 is covalently cross-linked (Glycyl lysine isopeptide (Lys-Gly) (interchain with G-Cter in ubiquitin); alternate).

The protein belongs to the histone H2B family. As to quaternary structure, the nucleosome is a histone octamer containing two molecules each of H2A, H2B, H3 and H4 assembled in one H3-H4 heterotetramer and two H2A-H2B heterodimers. The octamer wraps approximately 147 bp of DNA. Monoubiquitination at Lys-35 (H2BK34Ub) by the MSL1/MSL2 dimer is required for histone H3 'Lys-4' (H3K4me) and 'Lys-79' (H3K79me) methylation and transcription activation at specific gene loci, such as HOXA9 and MEIS1 loci. Similarly, monoubiquitination at Lys-121 (H2BK120Ub) by the RNF20/40 complex gives a specific tag for epigenetic transcriptional activation and is also prerequisite for histone H3 'Lys-4' and 'Lys-79' methylation. It also functions cooperatively with the FACT dimer to stimulate elongation by RNA polymerase II. H2BK120Ub also acts as a regulator of mRNA splicing: deubiquitination by USP49 is required for efficient cotranscriptional splicing of a large set of exons. Post-translationally, phosphorylated on Ser-15 (H2BS14ph) by STK4/MST1 during apoptosis; which facilitates apoptotic chromatin condensation. Also phosphorylated on Ser-15 in response to DNA double strand breaks (DSBs), and in correlation with somatic hypermutation and immunoglobulin class-switch recombination. Phosphorylation at Ser-37 (H2BS36ph) by AMPK in response to stress promotes transcription. In terms of processing, glcNAcylation at Ser-113 promotes monoubiquitination of Lys-121. It fluctuates in response to extracellular glucose, and associates with transcribed genes. ADP-ribosylated by PARP1 or PARP2 on Ser-7 (H2BS6ADPr) in response to DNA damage. H2BS6ADPr promotes recruitment of CHD1L. Mono-ADP-ribosylated on Glu-3 (H2BE2ADPr) by PARP3 in response to single-strand breaks. Poly ADP-ribosylation on Glu-36 (H2BE35ADPr) by PARP1 regulates adipogenesis: it inhibits phosphorylation at Ser-37 (H2BS36ph), thereby blocking expression of pro-adipogenetic genes. Post-translationally, crotonylation (Kcr) is specifically present in male germ cells and marks testis-specific genes in post-meiotic cells, including X-linked genes that escape sex chromosome inactivation in haploid cells. Crotonylation marks active promoters and enhancers and confers resistance to transcriptional repressors. It is also associated with post-meiotically activated genes on autosomes. In terms of processing, lactylated in macrophages by EP300/P300 by using lactoyl-CoA directly derived from endogenous or exogenous lactate, leading to stimulates gene transcription.

The protein localises to the nucleus. The protein resides in the chromosome. Functionally, core component of nucleosome. Nucleosomes wrap and compact DNA into chromatin, limiting DNA accessibility to the cellular machineries which require DNA as a template. Histones thereby play a central role in transcription regulation, DNA repair, DNA replication and chromosomal stability. DNA accessibility is regulated via a complex set of post-translational modifications of histones, also called histone code, and nucleosome remodeling. This chain is Histone H2B type 1-K, found in Macaca fascicularis (Crab-eating macaque).